Reading from the N-terminus, the 383-residue chain is Succinyl-diaminopimelate desuccinylase (383 aa).

Histidine 68 provides a ligand contact to Zn(2+). Aspartate 70 is a catalytic residue. Residue aspartate 100 participates in Zn(2+) binding. The Proton acceptor role is filled by glutamate 130. Glutamate 131, glutamate 159, and histidine 352 together coordinate Zn(2+).

Belongs to the peptidase M20A family. DapE subfamily. As to quaternary structure, homodimer. Requires Zn(2+) as cofactor. The cofactor is Co(2+).

It carries out the reaction N-succinyl-(2S,6S)-2,6-diaminopimelate + H2O = (2S,6S)-2,6-diaminopimelate + succinate. It participates in amino-acid biosynthesis; L-lysine biosynthesis via DAP pathway; LL-2,6-diaminopimelate from (S)-tetrahydrodipicolinate (succinylase route): step 3/3. In terms of biological role, catalyzes the hydrolysis of N-succinyl-L,L-diaminopimelic acid (SDAP), forming succinate and LL-2,6-diaminopimelate (DAP), an intermediate involved in the bacterial biosynthesis of lysine and meso-diaminopimelic acid, an essential component of bacterial cell walls. In Granulibacter bethesdensis (strain ATCC BAA-1260 / CGDNIH1), this protein is Succinyl-diaminopimelate desuccinylase.